A 149-amino-acid polypeptide reads, in one-letter code: Large ribosomal subunit protein uL13 (149 aa).

Belongs to the universal ribosomal protein uL13 family. Part of the 50S ribosomal subunit.

In terms of biological role, this protein is one of the early assembly proteins of the 50S ribosomal subunit, although it is not seen to bind rRNA by itself. It is important during the early stages of 50S assembly. The chain is Large ribosomal subunit protein uL13 from Chlorobium phaeobacteroides (strain DSM 266 / SMG 266 / 2430).